A 78-amino-acid chain; its full sequence is Large ribosomal subunit protein bL28 (78 aa).

Residues 1-23 (MSRVCQVSGKRVQTGNNVSHANN) form a disordered region. The span at 11 to 22 (RVQTGNNVSHAN) shows a compositional bias: polar residues.

This sequence belongs to the bacterial ribosomal protein bL28 family.

This chain is Large ribosomal subunit protein bL28, found in Xanthomonas campestris pv. campestris (strain 8004).